Here is a 633-residue protein sequence, read N- to C-terminus: Probable methyltransferase PMT15 (633 aa).

Topologically, residues 1-24 are cytoplasmic; that stretch reads MGNYRWPSKLSKLSLRAKQTNLYR. A helical; Signal-anchor for type II membrane protein membrane pass occupies residues 25–45; that stretch reads VILIAILCVTFYFVGVWQHSG. Over 46 to 633 the chain is Lumenal; that stretch reads RGISRSSISN…APAPDQSSDP (588 aa). N-linked (GlcNAc...) asparagine glycans are attached at residues Asn113 and Asn298.

This sequence belongs to the methyltransferase superfamily.

The protein resides in the golgi apparatus membrane. The protein is Probable methyltransferase PMT15 of Arabidopsis thaliana (Mouse-ear cress).